A 73-amino-acid chain; its full sequence is MKAGIHPEYHMIKVVMTDGTEYETRSTWGSEGAVMNLEIDSKSHPAWTGGNQQLMDRGGRVSKFNKRFGGLGL.

Belongs to the bacterial ribosomal protein bL31 family. Type A subfamily. In terms of assembly, part of the 50S ribosomal subunit.

Functionally, binds the 23S rRNA. The sequence is that of Large ribosomal subunit protein bL31 from Rhizobium johnstonii (strain DSM 114642 / LMG 32736 / 3841) (Rhizobium leguminosarum bv. viciae).